Reading from the N-terminus, the 642-residue chain is Chaperone protein DnaK (642 aa).

Residue T198 is modified to Phosphothreonine; by autocatalysis. Positions 602 to 642 (EAAGGAEAEAAAGGHGGASGSHDDKVVDADFEEVDGDKKGK) are disordered. Residues 603–613 (AAGGAEAEAAA) show a composition bias toward low complexity.

This sequence belongs to the heat shock protein 70 family.

Its function is as follows. Acts as a chaperone. This chain is Chaperone protein DnaK, found in Paramagnetospirillum magneticum (strain ATCC 700264 / AMB-1) (Magnetospirillum magneticum).